Consider the following 285-residue polypeptide: Protease HtpX homolog (285 aa).

The next 2 membrane-spanning stretches (helical) occupy residues 7-27 and 30-50; these read TAMLMAAITALFIVIGGMIGG and GMTIALLIALGMNFFSYWFSD. Position 131 (H131) interacts with Zn(2+). Residue E132 is part of the active site. H135 contacts Zn(2+). The next 2 membrane-spanning stretches (helical) occupy residues 146-166 and 177-197; these read ISATMAGAISALANFAMFFGG and IAGIAVALLAPIAGALIQMAI. Residue E202 participates in Zn(2+) binding.

The protein belongs to the peptidase M48B family. It depends on Zn(2+) as a cofactor.

The protein resides in the cell inner membrane. This chain is Protease HtpX homolog, found in Burkholderia mallei (strain NCTC 10247).